A 627-amino-acid chain; its full sequence is (+)-sabinene synthase, chloroplastic (627 aa).

The transit peptide at Met1 to Met46 directs the protein to the chloroplast. Mg(2+) contacts are provided by Asp378, Asp382, and Asp530. Residues Asp378–Asp382 carry the DDXXD motif motif.

The protein belongs to the terpene synthase family. Tpsd subfamily. Monomer. Mg(2+) serves as cofactor.

The protein localises to the plastid. It is found in the chloroplast. The catalysed reaction is (2E)-geranyl diphosphate = (1R,5R)-sabinene + diphosphate. It functions in the pathway terpene metabolism; oleoresin biosynthesis. Functionally, terpene synthase (TPS) involved in defensive oleoresin formation in conifers in response to insect attack (e.g. white pine weevil P.strobi) or other injury. Produces (+)-sabinene from geranyl diphosphate, but has no activity with geranylgeranyl diphosphate or farnesyl diphosphate. In Picea sitchensis (Sitka spruce), this protein is (+)-sabinene synthase, chloroplastic (TPS-sab).